A 316-amino-acid chain; its full sequence is HPr kinase/phosphorylase (316 aa).

Catalysis depends on residues H143 and K164. 158 to 165 (GEAGSGKS) serves as a coordination point for ATP. S165 is a Mg(2+) binding site. D182 acts as the Proton acceptor; for phosphorylation activity. Proton donor; for dephosphorylation activity in catalysis. The segment at 206 to 215 (LEVRGLGVLN) is important for the catalytic mechanism of both phosphorylation and dephosphorylation. E207 lines the Mg(2+) pocket. R251 is a catalytic residue. The segment at 272 to 277 (PVMPGR) is important for the catalytic mechanism of dephosphorylation.

Belongs to the HPrK/P family. As to quaternary structure, homohexamer. It depends on Mg(2+) as a cofactor.

The enzyme catalyses [HPr protein]-L-serine + ATP = [HPr protein]-O-phospho-L-serine + ADP + H(+). It catalyses the reaction [HPr protein]-O-phospho-L-serine + phosphate + H(+) = [HPr protein]-L-serine + diphosphate. Catalyzes the ATP- as well as the pyrophosphate-dependent phosphorylation of a specific serine residue in HPr, a phosphocarrier protein of the phosphoenolpyruvate-dependent sugar phosphotransferase system (PTS). HprK/P also catalyzes the pyrophosphate-producing, inorganic phosphate-dependent dephosphorylation (phosphorolysis) of seryl-phosphorylated HPr (P-Ser-HPr). The polypeptide is HPr kinase/phosphorylase (Xanthomonas euvesicatoria pv. vesicatoria (strain 85-10) (Xanthomonas campestris pv. vesicatoria)).